A 291-amino-acid chain; its full sequence is MAKGRVAERSQTEMLHSTPAGDRAVGTQGSAAPGNKDHLKEKPCVEAGSARTSLLILVSIFSCAAFVMFLVYKNFPQLSEEERVNMKVPRDMDDAKALGKVLSKYKDTFYVQVLVAYFATYIFLQTFAIPGSIFLSILSGFLYPFPLALFLVCLCSGLGASFCYMLSYLVGRPVVYKYLTEKAVKWSQQVERHREHLINYIIFLRITPFLPNWFINITSPVINVPLKVFFIGTFLGVAPPSFVAIKAGTTLYQLTTAGEAVSWNSVFILMILALLSILPAIFQKKLKQKFE.

The span at 1–11 shows a compositional bias: basic and acidic residues; that stretch reads MAKGRVAERSQ. Positions 1-38 are disordered; the sequence is MAKGRVAERSQTEMLHSTPAGDRAVGTQGSAAPGNKDH. Position 18 is a phosphothreonine (Thr18). A run of 6 helical transmembrane segments spans residues 52-72, 109-129, 147-169, 197-217, 225-245, and 262-282; these read TSLL…FLVY, FYVQ…TFAI, LALF…LSYL, LINY…FINI, PLKV…FVAI, and SWNS…PAIF. Residues 140 to 251 form a VTT domain; required for its function in autophagy region; the sequence is GFLYPFPLAL…FVAIKAGTTL (112 aa).

This sequence belongs to the TMEM41 family. As to quaternary structure, interacts with VMP1. Interacts with COPA, COPB1, VDAC1 and ERLIN2. Interacts with ATG2A. Interacts with SURF4.

It is found in the endoplasmic reticulum membrane. The protein localises to the endomembrane system. It carries out the reaction a 1,2-diacyl-sn-glycero-3-phospho-L-serine(in) = a 1,2-diacyl-sn-glycero-3-phospho-L-serine(out). The catalysed reaction is cholesterol(in) = cholesterol(out). The enzyme catalyses a 1,2-diacyl-sn-glycero-3-phosphocholine(in) = a 1,2-diacyl-sn-glycero-3-phosphocholine(out). It catalyses the reaction a 1,2-diacyl-sn-glycero-3-phosphoethanolamine(in) = a 1,2-diacyl-sn-glycero-3-phosphoethanolamine(out). Phospholipid scramblase involved in lipid homeostasis and membrane dynamics processes. Has phospholipid scramblase activity toward cholesterol and phosphatidylserine, as well as phosphatidylethanolamine and phosphatidylcholine. Required for autophagosome formation: participates in early stages of autophagosome biogenesis at the endoplasmic reticulum (ER) membrane by reequilibrating the leaflets of the ER as lipids are extracted by ATG2 (ATG2A or ATG2B) to mediate autophagosome assembly. In addition to autophagy, involved in other processes in which phospholipid scramblase activity is required. Required for normal motor neuron development. The sequence is that of Transmembrane protein 41B from Rattus norvegicus (Rat).